The primary structure comprises 210 residues: MGLKPLVIGITGGSGSGKTTVSRELVRRLTEDGSSAILLQQDSYYKDQSDKPMSERVKTNYDHPDSFETDLFVSDLRRLLRHEAISKPIYDYPNHTRAKEVEPVEPADVIIVDGVLLFNDSRVRDLLDMKIFVDTDDDIRFLRRLERDIDERGRTVRGVIDQYLATVKPMYHQFVEPTKRYANIIVPEGGENLVAIDMLTNQAKAMLKQN.

ATP is bound at residue 12–19 (GGSGSGKT).

The protein belongs to the uridine kinase family.

Its subcellular location is the cytoplasm. It catalyses the reaction uridine + ATP = UMP + ADP + H(+). The enzyme catalyses cytidine + ATP = CMP + ADP + H(+). The protein operates within pyrimidine metabolism; CTP biosynthesis via salvage pathway; CTP from cytidine: step 1/3. It functions in the pathway pyrimidine metabolism; UMP biosynthesis via salvage pathway; UMP from uridine: step 1/1. The sequence is that of Uridine kinase from Leuconostoc citreum (strain KM20).